We begin with the raw amino-acid sequence, 207 residues long: C-type lectin domain family 2 member D11 (207 aa).

At 1-44 (MSAKKASQPMLNTTGSLQEGEMGKMFHGKCLRIVSPESPAKLYC) the chain is on the cytoplasmic side. Phosphoserine occurs at positions 7 and 16. Residues 45 to 65 (CYGVIMVLSVAVVALSVALSV) traverse the membrane as a helical; Signal-anchor for type II membrane protein segment. Residues 66–207 (KMTPQISTIN…LQCKTPFSPM (142 aa)) lie on the Extracellular side of the membrane. Residues 87–198 (VGNKCFYFSE…SCSKLNSYSL (112 aa)) enclose the C-type lectin domain. Asn-100 is a glycosylation site (N-linked (GlcNAc...) asparagine).

It localises to the cell membrane. Its function is as follows. Receptor for KLRB1B that protects target cells against natural killer cell-mediated lysis. The sequence is that of C-type lectin domain family 2 member D11 (Clec2d11) from Rattus norvegicus (Rat).